Here is a 1005-residue protein sequence, read N- to C-terminus: Helicase-like transcription factor (1005 aa).

Residue Arg27 is modified to Omega-N-methylarginine. The DNA-binding element occupies 38 to 287 (EFQDIIPPDD…FSEKDQPENV (250 aa)). Lys112 is covalently cross-linked (Glycyl lysine isopeptide (Lys-Gly) (interchain with G-Cter in SUMO2)). At Tyr195 the chain carries Phosphotyrosine; by JAK2. Lys211 participates in a covalent cross-link: Glycyl lysine isopeptide (Lys-Gly) (interchain with G-Cter in SUMO2). 294 to 301 (DDMGLGKT) serves as a coordination point for ATP. Over residues 325-361 (KNQVKKECNSSESDKPGRKDTIKKTDGLSKEGSRYSE) the composition is skewed to basic and acidic residues. Residues 325–385 (KNQVKKECNS…SELSSSQPKR (61 aa)) form a disordered region. The segment covering 373 to 382 (YSMSELSSSQ) has biased composition (polar residues). 3 positions are modified to phosphoserine: Ser395, Ser396, and Ser398. Residues 427-603 (GPSKIKEDTA…WSLLSFLKLK (177 aa)) enclose the Helicase ATP-binding domain. The short motif at 554–557 (DEGH) is the DEGH box element. Thr733 is subject to Phosphothreonine. The RING-type zinc-finger motif lies at 757–798 (CAICLDSLTVPVITHCAHVFCKPCICQCIQNEQPHAKCPLCR). Required for interaction with the RFBP isoform of ATP11B regions lie at residues 767 to 772 (PVITHC) and 791 to 796 (HAKCPL). The region spanning 834–999 (ALMHALIDLR…EMKQAKINEI (166 aa)) is the Helicase C-terminal domain. The interval 922–1005 (SRVFLMDPAW…INEIRTLIDL (84 aa)) is interaction with SP1 and SP3.

It belongs to the SNF2/RAD54 helicase family. RAD16 subfamily. As to quaternary structure, interacts with SP1 and SP3 independently of DNA; the interaction with these transcriptional factors may be required for basal transcription of target genes. Interacts (via the RING-finger) with isoform RFBP of ATP11B. Progesterone-dependent isoform 1 interacts with EGR1; the interaction requires prior binding to DNA and represses c-Rel via a DNA looping mechanism. Interacts with GATA4. Interacts with PCNA; the interaction promotes polyubiquitination of PCNA through association with the UBE2B-RAD18 and UBE2V2-UBE2N ubiquitin ligase complexes. Interacts with RAD18, SHPRH, UBE2V2 and UBE2N. Phosphorylated on serine, threonine, and tyrosine residues. Tyr-195 phosphorylation is catalyzed by JAK2 in response to prolactin treatment. It is required for DNA binding. Isoform 1 is expressed preferentially in bladder, cervix, diaphragm, duodenum, epididymis, heart, kidney, liver, lung, ovary (granulosa cells), prostate, spleen, testis (predominantly in the Sertoli cells of the seminiferous tubules) and vagina. Isoform 2 is expressed preferentially in lactating mammary gland and uterine endometrium.

Its subcellular location is the cytoplasm. It localises to the nucleus. The protein localises to the nucleolus. The protein resides in the nucleoplasm. It catalyses the reaction S-ubiquitinyl-[E2 ubiquitin-conjugating enzyme]-L-cysteine + [acceptor protein]-L-lysine = [E2 ubiquitin-conjugating enzyme]-L-cysteine + N(6)-ubiquitinyl-[acceptor protein]-L-lysine.. Its pathway is protein modification; protein ubiquitination. In terms of biological role, has both helicase and E3 ubiquitin ligase activities. Possesses intrinsic ATP-dependent nucleosome-remodeling activity. This activity may be required for transcriptional activation or repression of specific target promoters. These may include the SERPINE1, to which this protein can bind directly. Mediates repression by c-Rel through a DNA-looping mechanism. Plays a role in error-free postreplication repair (PRR) of damaged DNA and maintains genomic stability through acting as a ubiquitin ligase for 'Lys-63'-linked polyubiquitination of chromatin-bound PCNA. Transcriptional regulator that mediates the ability of prolactin to augment progesterone-dependent transcription of the SCGB1A1/uteroglobin gene through a bipartite progesterone receptor half-site/overlapping Y-box combination (-38/-26) where progesterone activation is attenuated by nuclear factor Y binding. Regulation also involves two GC-rich sequences in the proximal promoter (positions -162/+90) and a RUSH/SMARCA3 site (positions -616/-611) in the 5'-untranslated region. In Oryctolagus cuniculus (Rabbit), this protein is Helicase-like transcription factor (HLTF).